The primary structure comprises 857 residues: MSDQRKGITFDGETFTFPETNDMVKTLFDPTVHKSACELIIVTLLVMNSLVFYSVSNNQSRINIFVGMYIFWRLCYNFGIGFLLNQQSNRFRLVKISEKMRLFDKGNKSFWARCVQTEVQSQMGPSYSISAHPVAFNTWLIFRKVVDLILMEDFITFMCVVVACAIDSDYQFLHGQPVWLTTLRLVIGSILIVFNFWVKVNAHNTIKDYAWYWGDFFFRQINNDDLIFDGVFEMFPHPMYSAGYVGYYGFALIAKSYTVLIVAVFGHFLQMVFLHLVENPHIDKIYGPPPNETSLKKLVKLKDLSFFDNVAPLVGLVNFNILRASDIINLLNCLTYAVAIPTVSSLATYNIEAMGKVLFCIAILIKGFESFVINGVLLLQSNYKTISEWYLANNLPVENSLNNFAVLYNSLINLTYSSFVGMNVFKLLTKLKYQDLIITGHIYLRIFLGLLLIITQVMINTSIVDSIGYFGWFYGDFFIPKASVLPQRAHLSKGGVYRYLNNPEQIFGVCGVMGVTMIVPTYDNFMICLLWMLNNFFRINFVERSHMIKIYGEREVSQDSGVMKTVKKHLLPESIQKKFEVSPTNEPKKRTNSVFIESFDSFIKELRSKNTSPVVSKERLAEMSQNEFFSGSDYCLEIEGLEDSSFVPHSFIGEPIEVKFRAPAKHSPKDWVGLYKVAHTSFSRYRTLVSSNNRWDWTGPEEQGTIVFSKEKLFCEEGLYEFRYHLDGKHDVAFISAPFEIKLRHIEVPLESAEADELANQLRKYIFDHVVSGVDDNETPIFVGISQTQDIVATYEHIAMLITKSTGVKVGKRFLIYNDNETGNKFTVGDLASRLINIKKVMHELEGDEYLRIKKLE.

The Lumenal segment spans residues 1–34 (MSDQRKGITFDGETFTFPETNDMVKTLFDPTVHK). Residues 35–55 (SACELIIVTLLVMNSLVFYSV) traverse the membrane as a helical segment. The Cytoplasmic segment spans residues 56-63 (SNNQSRIN). A helical membrane pass occupies residues 64 to 84 (IFVGMYIFWRLCYNFGIGFLL). Topologically, residues 85–145 (NQQSNRFRLV…FNTWLIFRKV (61 aa)) are lumenal. The helical transmembrane segment at 146-166 (VDLILMEDFITFMCVVVACAI) threads the bilayer. Residues 167–177 (DSDYQFLHGQP) are Cytoplasmic-facing. A helical membrane pass occupies residues 178 to 198 (VWLTTLRLVIGSILIVFNFWV). The Lumenal portion of the chain corresponds to 199–233 (KVNAHNTIKDYAWYWGDFFFRQINNDDLIFDGVFE). The chain crosses the membrane as a helical span at residues 234 to 254 (MFPHPMYSAGYVGYYGFALIA). The Cytoplasmic portion of the chain corresponds to 255–256 (KS). The chain crosses the membrane as a helical span at residues 257–277 (YTVLIVAVFGHFLQMVFLHLV). Residues 278–326 (ENPHIDKIYGPPPNETSLKKLVKLKDLSFFDNVAPLVGLVNFNILRASD) are Lumenal-facing. A helical membrane pass occupies residues 327-347 (IINLLNCLTYAVAIPTVSSLA). Residues 348–356 (TYNIEAMGK) lie on the Cytoplasmic side of the membrane. A helical membrane pass occupies residues 357 to 377 (VLFCIAILIKGFESFVINGVL). Residues 378–403 (LLQSNYKTISEWYLANNLPVENSLNN) are Lumenal-facing. Residues 404-424 (FAVLYNSLINLTYSSFVGMNV) form a helical membrane-spanning segment. Residues 425-436 (FKLLTKLKYQDL) lie on the Cytoplasmic side of the membrane. A helical transmembrane segment spans residues 437-457 (IITGHIYLRIFLGLLLIITQV). Over 458 to 511 (MINTSIVDSIGYFGWFYGDFFIPKASVLPQRAHLSKGGVYRYLNNPEQIFGVCG) the chain is Lumenal. Residues 512-532 (VMGVTMIVPTYDNFMICLLWM) form a helical membrane-spanning segment. Residues 533-857 (LNNFFRINFV…DEYLRIKKLE (325 aa)) lie on the Cytoplasmic side of the membrane.

This sequence belongs to the class VI-like SAM-binding methyltransferase superfamily. CHO2 family.

The protein resides in the endoplasmic reticulum membrane. It catalyses the reaction a 1,2-diacyl-sn-glycero-3-phosphoethanolamine + S-adenosyl-L-methionine = a 1,2-diacyl-sn-glycero-3-phospho-N-methylethanolamine + S-adenosyl-L-homocysteine + H(+). It functions in the pathway phospholipid metabolism; phosphatidylcholine biosynthesis. Functionally, catalyzes the first step of the methylation pathway of phosphatidylcholine biosynthesis, the SAM-dependent methylation of phosphatidylethanolamine (PE) to phosphatidylmonomethylethanolamine (PMME). The sequence is that of Phosphatidylethanolamine N-methyltransferase (CHO2) from Clavispora lusitaniae (strain ATCC 42720) (Yeast).